We begin with the raw amino-acid sequence, 116 residues long: Large ribosomal subunit protein bL19 (116 aa).

Belongs to the bacterial ribosomal protein bL19 family.

This protein is located at the 30S-50S ribosomal subunit interface and may play a role in the structure and function of the aminoacyl-tRNA binding site. The sequence is that of Large ribosomal subunit protein bL19 from Mannheimia succiniciproducens (strain KCTC 0769BP / MBEL55E).